A 1429-amino-acid chain; its full sequence is MSSNGSDLGHNNRRNEKGNPDSVHSSMRGSMSSTRRKSINFQNQLQLALESNECDVMYCSLSSGRFRAPNGENFPPHGGKLKLSPLEKYDDANRGVPPPSPAPNSDCFATCVANQLPSQSCSVGSAKPETSVMQKHGMAGNGMVGSGMSGNGMAANGTNYHQRGVSPNSRYRLERYRESQSTPQSKLMDNMGGMPSAVPSVSATRLLLPSNVPLPLAQCENYNAYLGSTVHTPVKRYVPTPPPAMELYSDLSISSSPAANLPTPAAAVASSASTSASAMQSQYANMPYNYRSKCCHSEASHGSLSRTSQTYASCSPACTSPSPAPSTSMSMVFSAASSCSPIMTATSSARSGNHRGDDSDSVIVVPPGGGAMAQIEAENPSGTCLHCNTVRRTTGVHQTTQTTGPISPVPISLPVPMAMPVMSGLNEQMPSQSLESSMVSVQAKRLEGGGNMAVPPGSNQHQLYRSQMASNPRLQHIHHQTQQHQSLQVLPQPQNHHLSCKKRIGMYMRRTTSQFFGVEPSTEAADCALWQGRHRRLAIRCFGMFDTELEYHMQQAIGGGNEDAGQSNGTNGNYAPDRPDILPVQDAIGMDMTMSGDSRRQKCYTNRDFLAGEFVERKASVGYMFVAMVSYLVHMFNKRRPIQMHRVRCPWQWSRSFAPIHVQSHSNQQTDADGCLTDGLEAIIDDEVFFDSPCEITTSAVNDESSDIGRQAAKPRPCADQSGVGVSVYMAERQQNGWRTSALNSGGNATSDINLTGDQSSHQPGAAHIPLCSSVSSQMQPAMRSSHSTTSTCNRGNRITAQLLDGVLENSRRPPLRCIKYFSVNDLDDRTDHRPFFTYWINTVQVVVLILSIICYGIAPIGIGSEQKTGQVLVTSLSLQTVQHVEQRNLWIGPRNIDLVHMGAKFAACMRRDIKITEVVTKTRRHERETACCIRNDDSGCVQSSQAECSIRGLYPTKSISTWKKWSPSESGPGGRISGSVCGLDPKFCDAPASIAPYEWPDDITKWPICRKTNSFTQRYRYKDHTSEHMVCEVIGHPCCTGLYGECRITTREYCDFIKGYFHEEASLCSQISCLNNVCGMFPFISVETPDQLYRLLTSLCMHAGILHLAITLIFQHLFLADLERLIGTVRTAIVYIMSGFAGNLTSAILVPHRPEVGPSASLSGVVASLIALLVWMHWKYLHKPHIALFKLLLLCSVLVGIGTLPYQLNFLGLLAGVICGCLLTMSLVPFTTFSKYGRKKKINLIWTCVLFHVVVYTAMIVTFYIHPSEFHSISFVDMFSNSNGYDNFTNADHHGVDVVSSNTRYSQTQNSQYYYHHHSDDIIRKSVTFTEKALVSHILYPTAPRKTSAQQWQEVEYSRSFNHLSNYSDRIKKSIGNISKLKQVFTSPIRFSNKNNHSNLMTELTSVHSENKQKYLGYINNNTEFNVL.

Disordered regions lie at residues 1–36, 560–579, and 740–766; these read MSSN…STRR, GNED…PDRP, and TSAL…QPGA. The Cytoplasmic portion of the chain corresponds to 1–843; the sequence is MSSNGSDLGH…RPFFTYWINT (843 aa). The segment covering 22 to 33 has biased composition (low complexity); sequence SVHSSMRGSMSS. Composition is skewed to polar residues over residues 564–573 and 740–763; these read AGQSNGTNGN and TSAL…SSHQ. A helical membrane pass occupies residues 844–864; it reads VQVVVLILSIICYGIAPIGIG. At 865-1099 the chain is on the lumenal side; it reads SEQKTGQVLV…PDQLYRLLTS (235 aa). The helical transmembrane segment at 1100-1120 threads the bilayer; the sequence is LCMHAGILHLAITLIFQHLFL. The Cytoplasmic segment spans residues 1121–1131; sequence ADLERLIGTVR. A helical transmembrane segment spans residues 1132-1152; that stretch reads TAIVYIMSGFAGNLTSAILVP. Residues 1153–1156 lie on the Lumenal side of the membrane; the sequence is HRPE. A helical membrane pass occupies residues 1157–1177; the sequence is VGPSASLSGVVASLIALLVWM. Over 1178–1186 the chain is Cytoplasmic; the sequence is HWKYLHKPH. The chain crosses the membrane as a helical span at residues 1187–1207; the sequence is IALFKLLLLCSVLVGIGTLPY. The Lumenal segment spans residues 1208-1210; that stretch reads QLN. Residues 1211–1231 traverse the membrane as a helical segment; the sequence is FLGLLAGVICGCLLTMSLVPF. The Cytoplasmic portion of the chain corresponds to 1232–1245; the sequence is TTFSKYGRKKKINL. Residues 1246 to 1266 form a helical membrane-spanning segment; that stretch reads IWTCVLFHVVVYTAMIVTFYI. At 1267-1429 the chain is on the lumenal side; it reads HPSEFHSISF…INNNTEFNVL (163 aa).

The protein belongs to the peptidase S54 family. Specifically expressed in the nervous system and in brain.

Its subcellular location is the endoplasmic reticulum membrane. In terms of biological role, rhomboid protease-like protein which has no protease activity but regulates the secretion of several ligands of the epidermal growth factor receptor. Indirectly activates the epidermal growth factor receptor signaling pathway and may thereby regulate sleep, cell survival, proliferation and migration. The chain is Inactive rhomboid protein 1 (rho-5) from Drosophila melanogaster (Fruit fly).